We begin with the raw amino-acid sequence, 319 residues long: ATP-dependent 6-phosphofructokinase (319 aa).

Gly-11 serves as a coordination point for ATP. An ADP-binding site is contributed by 21 to 25 (RAVVR). ATP contacts are provided by residues 72-73 (RC) and 102-105 (GDGS). A Mg(2+)-binding site is contributed by Asp-103. A substrate-binding site is contributed by 125-127 (TID). The active-site Proton acceptor is the Asp-127. Arg-154 is a binding site for ADP. Substrate is bound by residues Arg-162 and 169-171 (MGR). ADP is bound by residues 185-187 (GAE), Arg-211, and 213-215 (KKH). Substrate contacts are provided by residues Glu-222, Arg-243, and 249 to 252 (HVQR).

It belongs to the phosphofructokinase type A (PFKA) family. ATP-dependent PFK group I subfamily. Prokaryotic clade 'B1' sub-subfamily. As to quaternary structure, homotetramer. The cofactor is Mg(2+).

It localises to the cytoplasm. It catalyses the reaction beta-D-fructose 6-phosphate + ATP = beta-D-fructose 1,6-bisphosphate + ADP + H(+). Its pathway is carbohydrate degradation; glycolysis; D-glyceraldehyde 3-phosphate and glycerone phosphate from D-glucose: step 3/4. Its activity is regulated as follows. Allosterically activated by ADP and other diphosphonucleosides, and allosterically inhibited by phosphoenolpyruvate. Its function is as follows. Catalyzes the phosphorylation of D-fructose 6-phosphate to fructose 1,6-bisphosphate by ATP, the first committing step of glycolysis. The chain is ATP-dependent 6-phosphofructokinase from Bacillus cereus (strain B4264).